The sequence spans 605 residues: Leucine-rich repeat-containing protein 40 (605 aa).

The interval 1-26 (MSRFRRGGKAPDPLSGFRAPKEQEPA) is disordered. 19 LRR repeats span residues 83–104 (DLTKLILASNKLQLLSEDISLL), 106–127 (ALVVLDIHDNQIVSLPCAIKEL), 129–151 (NLQKLNISHNKIKQLPKELQHLQ), 152–173 (NLKSLLLQHNQLEELPDSIGHL), 175–196 (ILEELDVSNNCLRSISSSVGQL), 198–219 (GLVKFNLSSNKLTALPTEIGKM), 221–242 (NLKQLDCTSNLLENVPASVAGM), 244–265 (SLEQLYLRQNKLTYLPELPFLT), 266–287 (KLKELHVGNNQIQTLGPEHLQN), 290–311 (SLSVLELRYNKLKVLPEEISLL), 313–335 (GLERLDLSNNDLGSLPCTLGSLP), 336–357 (NLKSLQLEGNPLRGIRRDILNK), 429–450 (FITTVNFSKNQLTEVPARIVEM), 453–475 (SVCDVNLGFNKISSISLNLCMLL), 476–497 (KLTHIDMRNNVLTSLPSEMEAM), 499–520 (RLQSVILSFNRFKHFPDVLYRI), 522–543 (TLETILISSNQIGSIDPTQLIK), 546–567 (KLSTLDLQNNDLLQIPPALGNC), and 569–590 (SLRALHLEGNPFRNPRAAILAK).

The protein is Leucine-rich repeat-containing protein 40 (lrrc40) of Xenopus tropicalis (Western clawed frog).